Consider the following 101-residue polypeptide: DNA-binding protein Fis (101 aa).

Residues 77 to 96 (QTRAANMLGINRGTLRKKLK) constitute a DNA-binding region (H-T-H motif).

Belongs to the transcriptional regulatory Fis family. In terms of assembly, homodimer.

Activates ribosomal RNA transcription. Plays a direct role in upstream activation of rRNA promoters. This Shewanella baltica (strain OS223) protein is DNA-binding protein Fis.